A 1048-amino-acid polypeptide reads, in one-letter code: Platelet-derived growth factor receptor beta (1048 aa).

A signal peptide spans 1-30 (MLRASAMRAAVLHLTVALAALLSSCTTVSC). At 31–528 (LKIVPEEKQL…LVSSSLFSQV (498 aa)) the chain is on the extracellular side. The Ig-like C2-type 1 domain maps to 35–124 (PEEKQLILAE…EIKEVAVFVP (90 aa)). 2 cysteine pairs are disulfide-bonded: cysteine 52–cysteine 108 and cysteine 153–cysteine 194. N-linked (GlcNAc...) asparagine glycosylation is found at asparagine 87, asparagine 159, asparagine 224, and asparagine 239. Ig-like C2-type domains are found at residues 216–309 (PEDI…ASVN) and 319–406 (AVKS…KEVT). Cysteine 240 and cysteine 293 are disulfide-bonded. N-linked (GlcNAc...) asparagine glycans are attached at residues asparagine 309, asparagine 327, and asparagine 457. Cysteine 434 and cysteine 503 are joined by a disulfide. Residues 529–549 (VLLAVVLTLVPIIIMSIIILI) form a helical membrane-spanning segment. At 550–1048 (AVWKKKPRYE…PIPDPKPEKS (499 aa)) the chain is on the cytoplasmic side. Phosphotyrosine; by autocatalysis occurs at positions 558, 575, and 577. A Protein kinase domain is found at 596–957 (LVLGRTLGSG…FLVHCVGDML (362 aa)). ATP-binding positions include 602 to 610 (LGSGAFGRV) and lysine 630. 5 positions are modified to phosphotyrosine; by autocatalysis: tyrosine 735, tyrosine 746, tyrosine 758, tyrosine 766, and tyrosine 770. The active-site Proton acceptor is the aspartate 821. Phosphotyrosine; by autocatalysis occurs at positions 852 and 1036.

This sequence belongs to the protein kinase superfamily. Tyr protein kinase family. CSF-1/PDGF receptor subfamily. Interacts with homodimeric PDGFB and PDGFD, and with heterodimers formed by PDGFA and PDGFB. Monomer in the absence of bound ligand. Interaction with homodimeric PDGFB, heterodimers formed by PDGFA and PDGFB or homodimeric PDGFD, leads to receptor dimerization, where both PDGFRA homodimers and heterodimers with PDGFRB are observed. In terms of processing, ubiquitinated. After autophosphorylation, the receptor is polyubiquitinated, leading to its degradation. Autophosphorylated on tyrosine residues upon ligand binding. Autophosphorylation occurs in trans, i.e. one subunit of the dimeric receptor phosphorylates tyrosine residues on the other subunit.

The protein resides in the cell membrane. The protein localises to the cytoplasmic vesicle. It is found in the lysosome lumen. It catalyses the reaction L-tyrosyl-[protein] + ATP = O-phospho-L-tyrosyl-[protein] + ADP + H(+). With respect to regulation, present in an inactive conformation in the absence of bound ligand. Binding of PDGFB and/or PDGFD leads to dimerization and activation by autophosphorylation on tyrosine residues. Tyrosine-protein kinase that acts as a cell-surface receptor for homodimeric PDGFB and PDGFD and for heterodimers formed by PDGFA and PDGFB, and plays an essential role in the regulation of embryonic development, cell proliferation, survival, differentiation, chemotaxis and migration. Plays an essential role in blood vessel development by promoting proliferation, migration and recruitment of pericytes and smooth muscle cells to endothelial cells. Required for normal development of the cardiovascular system. Required for normal recruitment of pericytes (mesangial cells) in the kidney glomerulus, and for normal formation of a branched network of capillaries in kidney glomeruli. Promotes rearrangement of the actin cytoskeleton and the formation of membrane ruffles. Binding of its cognate ligands - homodimeric PDGFB, heterodimers formed by PDGFA and PDGFB or homodimeric PDGFD -leads to the activation of several signaling cascades; the response depends on the nature of the bound ligand and is modulated by the formation of heterodimers between PDGFRA and PDGFRB. Receptor signaling is down-regulated by protein phosphatases that dephosphorylate the receptor and its down-stream effectors, and by rapid internalization of the activated receptor. This is Platelet-derived growth factor receptor beta (pdgfrb) from Takifugu rubripes (Japanese pufferfish).